The sequence spans 164 residues: MNPTNLSKYPNKLIVSKIRNGIVIDHIPAGKALKVLRVLGITGSEGLRVALVMNVESRKLGRKDIVKIEEKFLSMKELSLIALIAPTATINVIKEYKVVEKQRVEPPSIVKGLIKCPNPTCISRKKNEPIKSLFKLKSTNPIMLECQYCGYVLKGDEIEDYIES.

C116, C121, C146, and C149 together coordinate Zn(2+).

This sequence belongs to the PyrI family. As to quaternary structure, contains catalytic and regulatory chains. It depends on Zn(2+) as a cofactor.

Involved in allosteric regulation of aspartate carbamoyltransferase. The sequence is that of Aspartate carbamoyltransferase regulatory chain from Staphylothermus marinus (strain ATCC 43588 / DSM 3639 / JCM 9404 / F1).